The following is a 294-amino-acid chain: 4-hydroxy-tetrahydrodipicolinate synthase (294 aa).

Pyruvate is bound at residue Thr-46. Tyr-135 functions as the Proton donor/acceptor in the catalytic mechanism. The active-site Schiff-base intermediate with substrate is Lys-164. Residue Ile-205 participates in pyruvate binding.

Belongs to the DapA family. As to quaternary structure, homotetramer; dimer of dimers.

The protein resides in the cytoplasm. The enzyme catalyses L-aspartate 4-semialdehyde + pyruvate = (2S,4S)-4-hydroxy-2,3,4,5-tetrahydrodipicolinate + H2O + H(+). It functions in the pathway amino-acid biosynthesis; L-lysine biosynthesis via DAP pathway; (S)-tetrahydrodipicolinate from L-aspartate: step 3/4. Catalyzes the condensation of (S)-aspartate-beta-semialdehyde [(S)-ASA] and pyruvate to 4-hydroxy-tetrahydrodipicolinate (HTPA). The chain is 4-hydroxy-tetrahydrodipicolinate synthase from Nitratiruptor sp. (strain SB155-2).